Here is a 59-residue protein sequence, read N- to C-terminus: Small ribosomal subunit protein bS21 (59 aa).

Residues 32-42 are compositionally biased toward basic and acidic residues; the sequence is VRKREHYDKPS. The interval 32-59 is disordered; that stretch reads VRKREHYDKPSVKRKKKAEAARRKNAKK. Over residues 43–59 the composition is skewed to basic residues; sequence VKRKKKAEAARRKNAKK.

The protein belongs to the bacterial ribosomal protein bS21 family.

The sequence is that of Small ribosomal subunit protein bS21 from Clostridioides difficile (strain 630) (Peptoclostridium difficile).